A 443-amino-acid chain; its full sequence is MNSEQTYFFVGIKGTGMSSLALILHDKGYKVLGSDIDKYTFTQRGLENAGIKILPFDEDNIKEDMIVVAGNAFGDDQVEIKKAHEMGLTVQTYPETVEQIIEETTSIGVAGAHGKTSTSGLLAHVLSGVSPTSYLVGDGSGKGTPNARFFVFEADEYRRHFVAYHPDYAIMTNIDFDHPDYFTDIDDVRDAFETLAMQTKKGIFVWGEDENLRKLNAKVPVHYYGTKSDDDFRAENIKRTTKGSNFDVYFHDEFIGNYDIPMFGEHNVLNSLAVIAVSYMEKVDQQEIAKELLTFKGVKRRFTEKRVADMVIIDDYAHHPAEIKATIDAARQQYPDKKIIAVFQPHTFSRTIALMDEFAESLSLADKVYLTDIFSSIREHDGKVSSEDLGKKISKGGEVLKLDNMSPLLDFHDDVVIFMGAGDIQKYEHAYEDLLSNLSLKNN.

ATP is bound at residue 111–117 (GAHGKTS).

Belongs to the MurCDEF family.

It is found in the cytoplasm. It carries out the reaction UDP-N-acetyl-alpha-D-muramate + L-alanine + ATP = UDP-N-acetyl-alpha-D-muramoyl-L-alanine + ADP + phosphate + H(+). Its pathway is cell wall biogenesis; peptidoglycan biosynthesis. In terms of biological role, cell wall formation. The sequence is that of UDP-N-acetylmuramate--L-alanine ligase from Ligilactobacillus salivarius (strain UCC118) (Lactobacillus salivarius).